Here is a 109-residue protein sequence, read N- to C-terminus: Small ribosomal subunit protein uS10 (109 aa).

This sequence belongs to the universal ribosomal protein uS10 family. Part of the 30S ribosomal subunit.

Functionally, involved in the binding of tRNA to the ribosomes. The polypeptide is Small ribosomal subunit protein uS10 (Koribacter versatilis (strain Ellin345)).